The chain runs to 332 residues: 30 kDa heat shock protein (332 aa).

Over Met-1–Trp-34 the chain is Extracellular. Residues Leu-35–Ile-55 traverse the membrane as a helical segment. At Ala-56 to Arg-65 the chain is on the cytoplasmic side. The helical transmembrane segment at Tyr-66–Ala-86 threads the bilayer. Residues Ser-87 to Lys-121 lie on the Extracellular side of the membrane. Residues Tyr-122–Thr-142 form a helical membrane-spanning segment. At Thr-143 to Ser-157 the chain is on the cytoplasmic side. Residues Leu-158–Ile-178 form a helical membrane-spanning segment. At Lys-179–Thr-181 the chain is on the extracellular side. The chain crosses the membrane as a helical span at residues Tyr-182–Cys-202. Over Gln-203–Asn-215 the chain is Cytoplasmic. A helical membrane pass occupies residues Ala-216–Ser-236. At Asp-237–Ala-248 the chain is on the extracellular side. The chain crosses the membrane as a helical span at residues Ile-249 to Ala-269. Topologically, residues Val-270 to Ala-332 are cytoplasmic. A disordered region spans residues Ala-290–Ala-332. A Phosphoserine modification is found at Ser-308. Positions Pro-322–Ala-332 are enriched in acidic residues. A Phosphothreonine modification is found at Thr-331.

The protein belongs to the archaeal/bacterial/fungal opsin family.

The protein localises to the membrane. In terms of biological role, probably cooperates with other heat shock proteins in the translocation of polypeptides through membranes. It may counteract the altering effect of heat shock on the plasma membrane. This is 30 kDa heat shock protein (HSP30) from Saccharomyces cerevisiae (strain ATCC 204508 / S288c) (Baker's yeast).